The chain runs to 128 residues: Small ribosomal subunit protein uS11 (128 aa).

It belongs to the universal ribosomal protein uS11 family. In terms of assembly, part of the 30S ribosomal subunit. Interacts with proteins S7 and S18. Binds to IF-3.

Located on the platform of the 30S subunit, it bridges several disparate RNA helices of the 16S rRNA. Forms part of the Shine-Dalgarno cleft in the 70S ribosome. The polypeptide is Small ribosomal subunit protein uS11 (Solidesulfovibrio magneticus (strain ATCC 700980 / DSM 13731 / RS-1) (Desulfovibrio magneticus)).